A 364-amino-acid chain; its full sequence is MSLSHLSLKYFRNIEALTLEPVNGVNIIYGENGSGKTSLLEAIYYLSHGKSFRTSKHKSIIAHQQEQFVIHGRKAIHDLSIPIGISKTQAGETNLKIQGKASRKISELAQLMPVQIITPESYSLFFGGPKERRKFLDLGLFHVEHEFFFLWQSFNKVLKQRNALLKSKPKNYFDQIKFWDKEFVRLAEQINKLRMAYISRFKQQFFDKMCAELTLIRDLEISFNAGWKESESLSDALELNFERDARQGFTSKGPHKADFSFSVAGSSVENIFSRGQLKLLLYALKVTQNSLIESETDKQSILLIDDLPSELSEDTKEKVGQLLAHCSSQIFISSILSESISAVVEPMQRELQMFHVKHGNLITR.

Residue 30–37 coordinates ATP; the sequence is GENGSGKT.

This sequence belongs to the RecF family.

It localises to the cytoplasm. The RecF protein is involved in DNA metabolism; it is required for DNA replication and normal SOS inducibility. RecF binds preferentially to single-stranded, linear DNA. It also seems to bind ATP. The sequence is that of DNA replication and repair protein RecF from Pseudoalteromonas translucida (strain TAC 125).